The chain runs to 244 residues: 5-oxoprolinase subunit A (244 aa).

It belongs to the LamB/PxpA family. As to quaternary structure, forms a complex composed of PxpA, PxpB and PxpC.

It catalyses the reaction 5-oxo-L-proline + ATP + 2 H2O = L-glutamate + ADP + phosphate + H(+). Functionally, catalyzes the cleavage of 5-oxoproline to form L-glutamate coupled to the hydrolysis of ATP to ADP and inorganic phosphate. This chain is 5-oxoprolinase subunit A, found in Escherichia fergusonii (strain ATCC 35469 / DSM 13698 / CCUG 18766 / IAM 14443 / JCM 21226 / LMG 7866 / NBRC 102419 / NCTC 12128 / CDC 0568-73).